The following is a 503-amino-acid chain: Probable cytosol aminopeptidase (503 aa).

K274 and D279 together coordinate Mn(2+). K286 is an active-site residue. The Mn(2+) site is built by D297, D356, and E358. R360 is a catalytic residue.

It belongs to the peptidase M17 family. Mn(2+) serves as cofactor.

It is found in the cytoplasm. The enzyme catalyses Release of an N-terminal amino acid, Xaa-|-Yaa-, in which Xaa is preferably Leu, but may be other amino acids including Pro although not Arg or Lys, and Yaa may be Pro. Amino acid amides and methyl esters are also readily hydrolyzed, but rates on arylamides are exceedingly low.. It carries out the reaction Release of an N-terminal amino acid, preferentially leucine, but not glutamic or aspartic acids.. In terms of biological role, presumably involved in the processing and regular turnover of intracellular proteins. Catalyzes the removal of unsubstituted N-terminal amino acids from various peptides. This Burkholderia cenocepacia (strain ATCC BAA-245 / DSM 16553 / LMG 16656 / NCTC 13227 / J2315 / CF5610) (Burkholderia cepacia (strain J2315)) protein is Probable cytosol aminopeptidase.